The chain runs to 682 residues: Potassium-transporting ATPase ATP-binding subunit (682 aa).

4 helical membrane-spanning segments follow: residues 34–54 (PVMF…LAMV), 58–78 (IAGS…TVLF), 219–239 (IALT…TATL), and 254–274 (VLVA…LSAI). The active-site 4-aspartylphosphate intermediate is aspartate 307. ATP-binding positions include aspartate 344, glutamate 348, 377–384 (FTAQSRMS), and lysine 395. The Mg(2+) site is built by aspartate 518 and aspartate 522. The next 3 membrane-spanning stretches (helical) occupy residues 588–608 (FAII…LNVM), 616–636 (AILS…PLAL), and 662–682 (LVVP…LGLA).

It belongs to the cation transport ATPase (P-type) (TC 3.A.3) family. Type IA subfamily. The system is composed of three essential subunits: KdpA, KdpB and KdpC.

Its subcellular location is the cell inner membrane. The catalysed reaction is K(+)(out) + ATP + H2O = K(+)(in) + ADP + phosphate + H(+). Part of the high-affinity ATP-driven potassium transport (or Kdp) system, which catalyzes the hydrolysis of ATP coupled with the electrogenic transport of potassium into the cytoplasm. This subunit is responsible for energy coupling to the transport system and for the release of the potassium ions to the cytoplasm. This Salmonella choleraesuis (strain SC-B67) protein is Potassium-transporting ATPase ATP-binding subunit.